Reading from the N-terminus, the 209-residue chain is D-aminoacyl-tRNA deacylase 1 (209 aa).

Mg(2+) contacts are provided by Val-4, Gln-6, and Cys-28. The Gly-cisPro motif, important for rejection of L-amino acids motif lies at 139 to 140 (GP). The disordered stretch occupies residues 142 to 209 (TIELESPAPG…EGDVSSEREP (68 aa)). Composition is skewed to basic and acidic residues over residues 159 to 170 (QLSKLEKQQQRK) and 181 to 194 (SSKE…EDRS). Ser-197, Ser-204, and Ser-205 each carry phosphoserine.

The protein belongs to the DTD family. As to quaternary structure, homodimer. Interacts with CDC45 and TOPBP1. In terms of processing, preferentially phosphorylated in cells arrested early in S phase. Phosphorylation in the C-terminus weakens the interaction with CDC45.

It is found in the nucleus. The protein localises to the cytoplasm. The enzyme catalyses glycyl-tRNA(Ala) + H2O = tRNA(Ala) + glycine + H(+). The catalysed reaction is a D-aminoacyl-tRNA + H2O = a tRNA + a D-alpha-amino acid + H(+). An aminoacyl-tRNA editing enzyme that deacylates mischarged D-aminoacyl-tRNAs. Also deacylates mischarged glycyl-tRNA(Ala), protecting cells against glycine mischarging by AlaRS. Acts via tRNA-based rather than protein-based catalysis; rejects L-amino acids rather than detecting D-amino acids in the active site. By recycling D-aminoacyl-tRNA to D-amino acids and free tRNA molecules, this enzyme counteracts the toxicity associated with the formation of D-aminoacyl-tRNA entities in vivo and helps enforce protein L-homochirality. In terms of biological role, ATPase involved in DNA replication, may facilitate loading of CDC45 onto pre-replication complexes. This Bos taurus (Bovine) protein is D-aminoacyl-tRNA deacylase 1 (DTD1).